We begin with the raw amino-acid sequence, 75 residues long: Sec-independent protein translocase protein TatA (75 aa).

A helical transmembrane segment spans residues 1–21 (MFGLSPAQLIILLVVILLIFG).

Belongs to the TatA/E family. As to quaternary structure, the Tat system comprises two distinct complexes: a TatABC complex, containing multiple copies of TatA, TatB and TatC subunits, and a separate TatA complex, containing only TatA subunits. Substrates initially bind to the TatABC complex, which probably triggers association of the separate TatA complex to form the active translocon.

The protein resides in the cell inner membrane. Part of the twin-arginine translocation (Tat) system that transports large folded proteins containing a characteristic twin-arginine motif in their signal peptide across membranes. TatA could form the protein-conducting channel of the Tat system. The polypeptide is Sec-independent protein translocase protein TatA (Haemophilus influenzae (strain PittEE)).